We begin with the raw amino-acid sequence, 468 residues long: Homocitrate synthase (468 aa).

In terms of domain architecture, Pyruvate carboxyltransferase spans 11–266 (VGILDSTLRE…IEVVDLKKLS (256 aa)). Residue arginine 19 participates in 2-oxoglutarate binding. A Mg(2+)-binding site is contributed by glutamate 20. 2-oxoglutarate contacts are provided by histidine 83, arginine 143, and threonine 177. Residues histidine 205 and histidine 207 each contribute to the Mg(2+) site. Histidine 299 serves as the catalytic Proton acceptor.

This sequence belongs to the alpha-IPM synthase/homocitrate synthase family. Homocitrate synthase LYS20/LYS21 subfamily. Requires Mg(2+) as cofactor. It depends on Mn(2+) as a cofactor.

It catalyses the reaction acetyl-CoA + 2-oxoglutarate + H2O = (2R)-homocitrate + CoA + H(+). Its pathway is amino-acid biosynthesis; L-lysine biosynthesis via AAA pathway; L-alpha-aminoadipate from 2-oxoglutarate: step 1/5. Its activity is regulated as follows. Inhibited by lysine. Its function is as follows. Catalyzes the aldol-type condensation of 2-oxoglutarate with acetyl-CoA to yield homocitrate. Carries out the first step of the alpha-aminoadipate (AAA) lysine biosynthesis pathway. Does not display 2-isopropylmalate synthase and citramalate synthase activities since it cannot use 2-oxoisovalerate or pyruvate as substrate. The protein is Homocitrate synthase of Sulfolobus acidocaldarius (strain ATCC 33909 / DSM 639 / JCM 8929 / NBRC 15157 / NCIMB 11770).